The primary structure comprises 296 residues: DNA primase small subunit PriS (296 aa).

Active-site residues include Asp-82, Asp-84, and Asp-191.

It belongs to the eukaryotic-type primase small subunit family. In terms of assembly, heterodimer of a small subunit (PriS) and a large subunit (PriL). Mg(2+) serves as cofactor. The cofactor is Mn(2+).

In terms of biological role, catalytic subunit of DNA primase, an RNA polymerase that catalyzes the synthesis of short RNA molecules used as primers for DNA polymerase during DNA replication. The small subunit contains the primase catalytic core and has DNA synthesis activity on its own. Binding to the large subunit stabilizes and modulates the activity, increasing the rate of DNA synthesis while decreasing the length of the DNA fragments, and conferring RNA synthesis capability. The DNA polymerase activity may enable DNA primase to also catalyze primer extension after primer synthesis. May also play a role in DNA repair. This chain is DNA primase small subunit PriS, found in Methanopyrus kandleri (strain AV19 / DSM 6324 / JCM 9639 / NBRC 100938).